The sequence spans 203 residues: LexA repressor (203 aa).

Positions 28–47 (IREIGDEFGITAKGAYDHLK) form a DNA-binding region, H-T-H motif. Residues Ser-127 and Lys-164 each act as for autocatalytic cleavage activity in the active site.

It belongs to the peptidase S24 family. Homodimer.

It carries out the reaction Hydrolysis of Ala-|-Gly bond in repressor LexA.. Its function is as follows. Represses a number of genes involved in the response to DNA damage (SOS response), including recA and lexA. In the presence of single-stranded DNA, RecA interacts with LexA causing an autocatalytic cleavage which disrupts the DNA-binding part of LexA, leading to derepression of the SOS regulon and eventually DNA repair. This chain is LexA repressor, found in Leptospira borgpetersenii serovar Hardjo-bovis (strain JB197).